A 219-amino-acid polypeptide reads, in one-letter code: Glutamine transport system permease protein GlnP (219 aa).

Over 1–22 (MQFDWSAIWPAIPLLIEGAKMT) the chain is Periplasmic. An ABC transmembrane type-1 domain is found at 19–209 (AKMTLWISVL…IITLVLSFIL (191 aa)). A helical transmembrane segment spans residues 23–43 (LWISVLGLAGGLVIGLLAGFA). The Cytoplasmic segment spans residues 44-53 (RTFGGWIANH). A helical transmembrane segment spans residues 54–74 (VALVFIEVIRGTPIVVQVMFI). Residues 75–88 (YFALPMAFNDLRID) are Periplasmic-facing. A helical membrane pass occupies residues 89–109 (PFTAAVVTIMINSGAYIAEIT). Over 110–150 (RGAVLSIHKGFREAGLALGLSRWETIRYVILPLALRRMLPP) the chain is Cytoplasmic. Residues 151–171 (LGNQWIISIKDTSLFIVIGVA) traverse the membrane as a helical segment. Residues 172 to 187 (ELTRQGQEIIAGNFRA) lie on the Periplasmic side of the membrane. A helical transmembrane segment spans residues 188–208 (LEIWSAVAVFYLIITLVLSFI). At 209–219 (LRRLERRMKIL) the chain is on the cytoplasmic side.

Belongs to the binding-protein-dependent transport system permease family. HisMQ subfamily.

It is found in the cell inner membrane. Its function is as follows. Part of the binding-protein-dependent transport system for glutamine; probably responsible for the translocation of the substrate across the membrane. This is Glutamine transport system permease protein GlnP (glnP) from Escherichia coli O6:H1 (strain CFT073 / ATCC 700928 / UPEC).